We begin with the raw amino-acid sequence, 354 residues long: Transcription factor BHLH3 (354 aa).

The tract at residues V124–S143 is disordered. The interval G178 to R191 is basic motif. The region spanning G178–L227 is the bHLH domain. The segment at K192 to L227 is helix-loop-helix motif.

Belongs to the bHLH protein family. In terms of assembly, interacts with LAX1. Phosphorylated by MAPK3 and MAPK6.

It is found in the nucleus. The protein resides in the cytoplasm. Functionally, transcription factor involved in defense responses that functions downstream of RAC1 and upstream of PAL1 and WRKY19 genes. This Oryza sativa subsp. japonica (Rice) protein is Transcription factor BHLH3.